Consider the following 218-residue polypeptide: Peroxiredoxin-like 2A (218 aa).

The segment at 3–101 is thioredoxin fold; that stretch reads MWSIGAGAIG…DELGVPLYAV (99 aa). Active-site redox-active residues include Cys-74 and Cys-77.

The protein belongs to the peroxiredoxin-like PRXL2 family. PRXL2A subfamily.

The protein resides in the cytoplasm. It localises to the secreted. Functionally, involved in redox regulation of the cell. Acts as an antioxidant. Inhibits TNFSF11-induced NFKB1 and JUN activation and osteoclast differentiation. May affect bone resorption and help to maintain bone mass. Acts as a negative regulator of macrophage-mediated inflammation by inhibiting macrophage production of inflammatory cytokines, probably through suppression of the MAPK signaling pathway. The protein is Peroxiredoxin-like 2A (PRXL2A) of Bos taurus (Bovine).